Reading from the N-terminus, the 409-residue chain is MAKRTPSIDTKNLTAVQLMELDACVRCGECVKWCPTYAASGGKPGLAPRDKILRWRQYMNKSYGLKAKLFGPQEVSPSELEEFKDDVHGCTTCGVCATVCEAGINTVEIWEAIRTNLVKKGIGPYGKQSAFPKLVGQYHNPYMKDQKDRLAWVPPDVKIEDKADIVYFTGCTAGYNQLALAFATSRVLNKLGIKFAMLGEEEWCCGSALIRTGQVHVDDVARELARHNVEALQKKGAKKVLFACAGCFRAAKIDWPRLLGKELPFEVIHITQFLADLIQADKIKWEKPINKTITYHDPCHLGRHVGVFNAPRYVLSHIPGVKFVEMDRSKEFQRCCGAGGGVKAGMPDLAVAMGESRVKDALETNADILSSACPFCKRNLSDGRDALKSDIVVEDIIELVAEALGLSTS.

2 consecutive 4Fe-4S ferredoxin-type domains span residues Thr14–Pro44 and Glu81–Trp110. 8 residues coordinate [4Fe-4S] cluster: Cys24, Cys27, Cys30, Cys34, Cys90, Cys93, Cys96, and Cys100.

It belongs to the HdrD family. As to quaternary structure, the dihydromethanophenazine:CoB--CoM heterodisulfide reductase is composed of two subunits; HdrD and HdrE. Requires [4Fe-4S] cluster as cofactor.

It catalyses the reaction methanophenazine + coenzyme B + coenzyme M = dihydromethanophenazine + coenzyme M-coenzyme B heterodisulfide. The protein operates within cofactor metabolism; coenzyme M-coenzyme B heterodisulfide reduction; coenzyme B and coenzyme M from coenzyme M-coenzyme B heterodisulfide: step 1/1. Functionally, part of a complex that catalyzes the reversible reduction of CoM-S-S-CoB to the thiol-coenzymes H-S-CoM (coenzyme M) and H-S-CoB (coenzyme B). In Methanosarcina barkeri (strain Fusaro / DSM 804), this protein is Dihydromethanophenazine:CoB--CoM heterodisulfide reductase subunit D (hdrD).